Consider the following 195-residue polypeptide: Interferon tau (195 aa).

Positions Met1–Gly23 are cleaved as a signal peptide. 2 cysteine pairs are disulfide-bonded: Cys52–Cys162 and Cys87–Cys109.

Belongs to the alpha/beta interferon family. IFN-alphaII subfamily.

It localises to the secreted. Its function is as follows. Paracrine hormone primarily responsible for maternal recognition of pregnancy. Interacts with endometrial receptors, probably type I interferon receptors, and blocks estrogen receptor expression, preventing the estrogen-induced increase in oxytocin receptor expression in the endometrium. This results in the suppression of the pulsatile endometrial release of the luteolytic hormone prostaglandin F2-alpha, hindering the regression of the corpus luteum (luteolysis) and therefore a return to ovarian cyclicity. This, and a possible direct effect of IFN-tau on prostaglandin synthesis, leads in turn to continued ovarian progesterone secretion, which stimulates the secretion by the endometrium of the nutrients required for the growth of the conceptus. In summary, displays particularly high antiviral and antiproliferative potency concurrently with particular weak cytotoxicity, high antiluteolytic activity and immunomodulatory properties. In contrast with other IFNs, IFN-tau is not virally inducible. The protein is Interferon tau (IFNT) of Giraffa camelopardalis (Giraffe).